A 298-amino-acid chain; its full sequence is Lipoyl synthase (298 aa).

[4Fe-4S] cluster contacts are provided by C37, C42, C48, C63, C67, C70, and S277. Residues 49–266 (WGGGTATVML…KTLAESYGFL (218 aa)) form the Radical SAM core domain.

Belongs to the radical SAM superfamily. Lipoyl synthase family. [4Fe-4S] cluster is required as a cofactor.

The protein localises to the cytoplasm. The enzyme catalyses [[Fe-S] cluster scaffold protein carrying a second [4Fe-4S](2+) cluster] + N(6)-octanoyl-L-lysyl-[protein] + 2 oxidized [2Fe-2S]-[ferredoxin] + 2 S-adenosyl-L-methionine + 4 H(+) = [[Fe-S] cluster scaffold protein] + N(6)-[(R)-dihydrolipoyl]-L-lysyl-[protein] + 4 Fe(3+) + 2 hydrogen sulfide + 2 5'-deoxyadenosine + 2 L-methionine + 2 reduced [2Fe-2S]-[ferredoxin]. Its pathway is protein modification; protein lipoylation via endogenous pathway; protein N(6)-(lipoyl)lysine from octanoyl-[acyl-carrier-protein]: step 2/2. Functionally, catalyzes the radical-mediated insertion of two sulfur atoms into the C-6 and C-8 positions of the octanoyl moiety bound to the lipoyl domains of lipoate-dependent enzymes, thereby converting the octanoylated domains into lipoylated derivatives. The polypeptide is Lipoyl synthase (Myxococcus xanthus (strain DK1622)).